Reading from the N-terminus, the 539-residue chain is Sodium/hydrogen exchanger 9B2 (539 aa).

At Met1–Leu94 the chain is on the cytoplasmic side. The helical transmembrane segment at Ala95–Ile112 threads the bilayer. The Extracellular segment spans residues Thr113–Gly121. The chain crosses the membrane as a helical span at residues Asn122–Ser141. Over Leu142–Pro152 the chain is Cytoplasmic. A helical transmembrane segment spans residues Pro153–Val169. The Extracellular segment spans residues Ile170 to Lys179. Residues Trp180–Gly197 form a helical membrane-spanning segment. Over Leu198–Leu208 the chain is Cytoplasmic. The chain crosses the membrane as a helical span at residues Lys209 to Met235. Residues Gly236–Trp241 lie on the Extracellular side of the membrane. The helical transmembrane segment at Gly242 to Gly250 threads the bilayer. At Ala251–Leu278 the chain is on the cytoplasmic side. The Na(+) site is built by Val252, Gly283, Asp286, and Asp287. The chain crosses the membrane as a helical span at residues Leu279–Leu298. The Extracellular portion of the chain corresponds to Gly299–Leu308. The chain crosses the membrane as a helical span at residues Asn309–Leu332. Topologically, residues His333–Arg347 are cytoplasmic. Residues Ser348–Phe365 form a helical membrane-spanning segment. Residues Gly366–Gly369 are Extracellular-facing. Residues Ser370–Leu381 traverse the membrane as a helical segment. The Cytoplasmic segment spans residues Ala382 to Ala398. A helical membrane pass occupies residues Val399–Ala419. Topologically, residues Ser420–Thr425 are extracellular. Residues Val426–Val448 traverse the membrane as a helical segment. Residues Cys449 to Ala469 lie on the Cytoplasmic side of the membrane. Residues Thr470–Asp481 form a helical membrane-spanning segment. The Extracellular portion of the chain corresponds to Thr482 to Tyr494. Residues Gly495 to Ile517 form a helical membrane-spanning segment. Over Gly518 to Val539 the chain is Cytoplasmic.

Belongs to the monovalent cation:proton antiporter 1 (CPA1) transporter (TC 2.A.36) family. In terms of assembly, homodimer; dimerization is essential for SLC9B2 activity. Lipids seem to play a role in the stabilization of the dimerization subdomain.

Its subcellular location is the cell membrane. It is found in the mitochondrion membrane. The protein resides in the endosome membrane. The protein localises to the recycling endosome membrane. It localises to the cytoplasmic vesicle. Its subcellular location is the secretory vesicle. It is found in the synaptic vesicle membrane. The protein resides in the basolateral cell membrane. The protein localises to the apical cell membrane. It catalyses the reaction Li(+)(out) + H(+)(in) = Li(+)(in) + H(+)(out). The enzyme catalyses Li(+)(in) + Na(+)(out) = Li(+)(out) + Na(+)(in). The catalysed reaction is Na(+)(in) + H(+)(out) = Na(+)(out) + H(+)(in). Allosterically inhibited by the N-terminal domain. Inhibited by phloretin. Its function is as follows. Electroneutral Na(+) Li(+)/H(+) antiporter that extrudes Na(+) or Li(+) in exchange for external protons across the membrane. Uses the proton gradient/membrane potential to extrude sodium. Contributes to the regulation of intracellular pH and sodium homeostasis. Also able to mediate Na(+)/Li(+) antiporter activity in kidney. The chain is Sodium/hydrogen exchanger 9B2 (slc9b2) from Xenopus tropicalis (Western clawed frog).